The primary structure comprises 103 residues: N(4)-acetylcytidine amidohydrolase (103 aa).

Residues 6 to 101 (ITFFQRFQDD…QTQFYVIEFK (96 aa)) form the ASCH domain. The active-site Proton acceptor is Lys21. Catalysis depends on Thr24, which acts as the Nucleophile. Glu74 acts as the Proton donor in catalysis.

This sequence belongs to the N(4)-acetylcytidine amidohydrolase family.

It catalyses the reaction N(4)-acetylcytidine + H2O = cytidine + acetate + H(+). The enzyme catalyses N(4)-acetyl-2'-deoxycytidine + H2O = 2'-deoxycytidine + acetate + H(+). It carries out the reaction N(4)-acetylcytosine + H2O = cytosine + acetate + H(+). Its function is as follows. Catalyzes the hydrolysis of N(4)-acetylcytidine (ac4C). The sequence is that of N(4)-acetylcytidine amidohydrolase (yqfB) from Escherichia coli (strain SE11).